We begin with the raw amino-acid sequence, 532 residues long: 4-amino-L-phenylalanyl-[CmlP-peptidyl-carrier-protein] 3-hydroxylase (532 aa).

Fe cation-binding residues include H305, H307, D309, H310, E377, and D403.

This sequence belongs to the metallo-beta-lactamase superfamily. As to quaternary structure, homodimer. Fe(2+) serves as cofactor.

The catalysed reaction is 4-amino-L-phenylalanyl-[peptidyl-carrier protein] + AH2 + O2 = (2R)-2-(4-aminophenyl)-L-seryl-[peptidyl-carrier protein] + A + H2O. The protein operates within antibiotic biosynthesis. Involved in chloramphenicol biosynthesis. Catalyzes the beta-hydroxylation of 4-amino-L-phenylalanine (L-PAPA) covalently bound to CmlP to form L-p-aminophenylserine. The chain is 4-amino-L-phenylalanyl-[CmlP-peptidyl-carrier-protein] 3-hydroxylase from Streptomyces venezuelae (strain ATCC 10712 / CBS 650.69 / DSM 40230 / JCM 4526 / NBRC 13096 / PD 04745).